We begin with the raw amino-acid sequence, 470 residues long: Asparagine--tRNA ligase (470 aa).

This sequence belongs to the class-II aminoacyl-tRNA synthetase family. As to quaternary structure, homodimer.

It is found in the cytoplasm. The enzyme catalyses tRNA(Asn) + L-asparagine + ATP = L-asparaginyl-tRNA(Asn) + AMP + diphosphate + H(+). This Blochmanniella floridana protein is Asparagine--tRNA ligase.